The sequence spans 301 residues: Methionyl-tRNA formyltransferase (301 aa).

Residue 109–112 (SLLP) participates in (6S)-5,6,7,8-tetrahydrofolate binding.

It belongs to the Fmt family.

The enzyme catalyses L-methionyl-tRNA(fMet) + (6R)-10-formyltetrahydrofolate = N-formyl-L-methionyl-tRNA(fMet) + (6S)-5,6,7,8-tetrahydrofolate + H(+). Its function is as follows. Attaches a formyl group to the free amino group of methionyl-tRNA(fMet). The formyl group appears to play a dual role in the initiator identity of N-formylmethionyl-tRNA by promoting its recognition by IF2 and preventing the misappropriation of this tRNA by the elongation apparatus. This is Methionyl-tRNA formyltransferase from Anaplasma marginale (strain St. Maries).